The primary structure comprises 146 residues: Ribonuclease H (146 aa).

Residues 1–143 (MRKKIIIYTD…CDYLARQAIK (143 aa)) form the RNase H type-1 domain. Mg(2+)-binding residues include Asp-10, Glu-48, Asp-70, and Asp-135.

Belongs to the RNase H family. In terms of assembly, monomer. Mg(2+) is required as a cofactor.

The protein localises to the cytoplasm. The catalysed reaction is Endonucleolytic cleavage to 5'-phosphomonoester.. Endonuclease that specifically degrades the RNA of RNA-DNA hybrids. In Prosthecochloris aestuarii (strain DSM 271 / SK 413), this protein is Ribonuclease H.